The chain runs to 103 residues: Large ribosomal subunit protein bL21 (103 aa).

Belongs to the bacterial ribosomal protein bL21 family. Part of the 50S ribosomal subunit. Contacts protein L20.

Functionally, this protein binds to 23S rRNA in the presence of protein L20. The sequence is that of Large ribosomal subunit protein bL21 from Shewanella woodyi (strain ATCC 51908 / MS32).